Consider the following 274-residue polypeptide: 3-methyl-2-oxobutanoate hydroxymethyltransferase (274 aa).

2 residues coordinate Mg(2+): Asp49 and Asp88. Residues 49–50 (DS), Asp88, and Lys118 contribute to the 3-methyl-2-oxobutanoate site. Residue Glu120 participates in Mg(2+) binding. Catalysis depends on Glu187, which acts as the Proton acceptor.

This sequence belongs to the PanB family. In terms of assembly, homodecamer; pentamer of dimers. The cofactor is Mg(2+).

Its subcellular location is the cytoplasm. The catalysed reaction is 3-methyl-2-oxobutanoate + (6R)-5,10-methylene-5,6,7,8-tetrahydrofolate + H2O = 2-dehydropantoate + (6S)-5,6,7,8-tetrahydrofolate. The protein operates within cofactor biosynthesis; (R)-pantothenate biosynthesis; (R)-pantoate from 3-methyl-2-oxobutanoate: step 1/2. In terms of biological role, catalyzes the reversible reaction in which hydroxymethyl group from 5,10-methylenetetrahydrofolate is transferred onto alpha-ketoisovalerate to form ketopantoate. The sequence is that of 3-methyl-2-oxobutanoate hydroxymethyltransferase from Rhodopseudomonas palustris (strain BisB18).